The primary structure comprises 758 residues: Probable TonB-dependent receptor NMB0964 (758 aa).

Positions 1–24 are cleaved as a signal peptide; the sequence is MAQTTLKPIVLSILLINTPLLAQA. The TBDR plug domain occupies 50 to 161; sequence LLHTSTASDK…VAGLVDVADG (112 aa). One can recognise a TBDR beta-barrel domain in the interval 171–758; the sequence is GVSGELGLRL…SFTGGVNVKF (588 aa). A TonB C-terminal box motif is present at residues 741–758; that stretch reads SDTPQMGRSFTGGVNVKF.

This sequence belongs to the TonB-dependent receptor family.

Its subcellular location is the cell outer membrane. Its function is as follows. Probable receptor, TonB-dependent. This chain is Probable TonB-dependent receptor NMB0964, found in Neisseria meningitidis serogroup B (strain ATCC BAA-335 / MC58).